The chain runs to 453 residues: MRGFVPPTSSPDRGSKKVGRIVALDPPLESFQGYRMDLHTKGLNLLLSSGGHWSANRDADSVISRDDADYVVVIASSIGSYGFDRPIGDEYIRSDLTGQKHEACESRAWWKGQICAWSYSGRRHCEDVHIPFDFLRSDGLCYHIMAPLTFMKALDTHQADQLLSMHGSVPSAWSAYVTGRDYSQPTQYYTEEVADWRMLLREDDMASSYLLLVVTEGNAAELWTYDPYYTKTIGMEHGYSVRWYFIRDRNVGEAPIVLYARGGGVLKFIRLYKGRGTLTSLGARAMTTQEVTEFTCFRTHTYYFTGTKKYDCHPGGHRFDVPRWRSHINVSAHHLPVPPKCGCLKFPKLFKDYVIFDHPNVVGRAGEYVSLGPWSTGLQAVVTFKPQPRRHRVVLATYWDACSNTKRRVGIDVRTDRKNHMVWLKADKPVSREMWFVSEVDVVRVYVTWLSPE.

This is an uncharacterized protein from Galliformes (FAdV-1).